A 152-amino-acid chain; its full sequence is MTSLVYFSSASENTHRFVQKLGVPATRIPLHDRAGTFEVDEPYVLILPTYGGGITATGRDTSYVPKQVIRFLNNTHNRSLIRGVIAAGNTNFGESYCYAGNVISQKCRVPYLYRFELMGTAEDVVAVLDGLEQFMESEQWHRQSQTQPRLGV.

Belongs to the NrdI family.

In terms of biological role, probably involved in ribonucleotide reductase function. The sequence is that of Protein NrdI from Rhodococcus opacus (strain B4).